Reading from the N-terminus, the 420-residue chain is D-tagatose-1,6-bisphosphate aldolase subunit GatZ (420 aa).

It belongs to the GatZ/KbaZ family. GatZ subfamily. Forms a complex with GatY.

It participates in carbohydrate metabolism; D-tagatose 6-phosphate degradation; D-glyceraldehyde 3-phosphate and glycerone phosphate from D-tagatose 6-phosphate: step 2/2. Functionally, component of the tagatose-1,6-bisphosphate aldolase GatYZ that is required for full activity and stability of the Y subunit. Could have a chaperone-like function for the proper and stable folding of GatY. When expressed alone, GatZ does not show any aldolase activity. Is involved in the catabolism of galactitol. The polypeptide is D-tagatose-1,6-bisphosphate aldolase subunit GatZ (Escherichia coli O6:K15:H31 (strain 536 / UPEC)).